We begin with the raw amino-acid sequence, 215 residues long: Protein C' (215 aa).

The interval methionine 12–arginine 34 is disordered. The interval phenylalanine 15–leucine 22 is involved in self-degradation and in host STAT1 degradation.

It belongs to the respirovirus protein C family. The different isoforms interact (via C-terminus) with unphosphorylated and phosphorylated human STAT1 (via N-terminus), favoring the formation of parallel STAT1 homodimers. The different isoforms do not interact with host STAT2. C protein interacts with L protein; this interaction has an inhibitory effect on viral transcription and replication. Post-translationally, Y1 and Y2 proteins are produced not only by alternative initiation, but also by proteolytic cleavage of C'. Only alternative initiation is detected in vitro, whereas in vivo cleavage seems to be predominant.

Its subcellular location is the host cytoplasm. In terms of biological role, the different products prevent the establishment of cellular antiviral state by blocking the interferon-alpha/beta (IFN-alpha/beta) and IFN-gamma signaling pathways. They inhibit IFN-alpha/beta induced tyrosine phosphorylation of STAT1 and STAT2. Blocking the IFN-alpha/beta pathway requires binding to STAT1 in the cytoplasm. They inhibit IFN-gamma induced serine phosphorylation of STAT1. Block the IFN-gamma pathway by binding to and stabilizing the parallel form of the STAT1 dimer, further inducing high-molecular-weight complex formation and inhibition of transcription by IFN-gamma. May also have a role in preventing the cell to enter apoptosis. Modulate regulation of viral transcription and replication. Overexpression inhibits the viral RNA polymerase. The absence of all C', C, Y1 and Y2 proteins leads to viral delayed growth. Plays an important role in virion particles release. Modulates virion shape. In Sendai virus (strain Nagoya) (SeV), this protein is Protein C' (P/V/C).